Reading from the N-terminus, the 412-residue chain is Ornithine cyclodeaminase (412 aa).

10 residues coordinate NAD(+): asparagine 237, alanine 238, aspartate 316, threonine 348, methionine 349, leucine 350, histidine 351, aspartate 369, aspartate 392, and valine 393.

The protein belongs to the AgrE/ArgZ ornithine cyclodeaminase family. The cofactor is NAD(+).

The catalysed reaction is L-ornithine = L-proline + NH4(+). Catalyzes the conversion of ornithine to proline, with the release of ammonia. This Methanopyrus kandleri (strain AV19 / DSM 6324 / JCM 9639 / NBRC 100938) protein is Ornithine cyclodeaminase.